We begin with the raw amino-acid sequence, 541 residues long: Molybdate transporter 1 (541 aa).

Helical transmembrane passes span 24 to 44 (LLLSEISGSLGDLGTLLPLLL), 58 to 78 (LLFSGLFNILTGLVFGVPLPV), 98 to 118 (TVAAGAWVGFAVLLLGGTGGL), 137 to 157 (AGMSLVVAAGGGMVRPLGWLW), and 168 to 188 (GLGEWLDSRALAVLAFGGLVV). Positions 193–213 (QQQQQQQSGEKPQERRKKRSK) are disordered. Helical transmembrane passes span 214–234 (MPVQVPYALVLFLVGIMFAVV) and 287–307 (MAIAQLPLTTLNSIIAASALA). The tract at residues 317–366 (PQLYADDESSDSPLSPSPSASSSSLSSAPPQTPSAETPKPLSSPTSAEEG) is disordered. The span at 327-351 (DSPLSPSPSASSSSLSSAPPQTPSA) shows a compositional bias: low complexity. Transmembrane regions (helical) follow at residues 413–433 (IILLGLTKFLLGLFFPGPGLL) and 435–455 (LLGKFPKAFLGVMVLGAGVEL). The disordered stretch occupies residues 510-541 (TEKGRGGEQGLLGEEEEEEEQGRVDEESPLLR).

The protein belongs to the SLC26A/SulP transporter (TC 2.A.53) family.

The protein localises to the vacuole membrane. Functionally, exports stored molybdate from the vacuole into the cytosol, making it available for molybdate cofactor (Moco) biosynthesis. Plays a role in molybdate homeostasis as high cytosolic levels of molybdate are toxic to cells. Not required for molybdate import into cells. This Neurospora crassa (strain ATCC 24698 / 74-OR23-1A / CBS 708.71 / DSM 1257 / FGSC 987) protein is Molybdate transporter 1.